The primary structure comprises 276 residues: Large ribosomal subunit protein uL2 (276 aa).

Residues 221–276 (RGSAMNPNDHPHGGGEGRAPIGRKSPMTPWGKKARGVKTRDRKKASNALIIRRRKK) form a disordered region. The span at 252–276 (KKARGVKTRDRKKASNALIIRRRKK) shows a compositional bias: basic residues.

Belongs to the universal ribosomal protein uL2 family. In terms of assembly, part of the 50S ribosomal subunit. Forms a bridge to the 30S subunit in the 70S ribosome.

Its function is as follows. One of the primary rRNA binding proteins. Required for association of the 30S and 50S subunits to form the 70S ribosome, for tRNA binding and peptide bond formation. It has been suggested to have peptidyltransferase activity; this is somewhat controversial. Makes several contacts with the 16S rRNA in the 70S ribosome. The protein is Large ribosomal subunit protein uL2 of Aster yellows witches'-broom phytoplasma (strain AYWB).